The sequence spans 193 residues: Lipid A acyltransferase PagP (193 aa).

A signal peptide spans 1 to 32 (MNGMAVVMIIRKYFLIIALLVMPWLAIPSVSA). Catalysis depends on residues histidine 65, aspartate 108, and serine 109.

Belongs to the lipid A palmitoyltransferase family. As to quaternary structure, homodimer.

The protein resides in the cell outer membrane. The enzyme catalyses a lipid A + a 1,2-diacyl-sn-glycero-3-phosphocholine = a hepta-acyl lipid A + a 2-acyl-sn-glycero-3-phosphocholine. It carries out the reaction a lipid IVA + a 1,2-diacyl-sn-glycero-3-phosphocholine = a lipid IVB + a 2-acyl-sn-glycero-3-phosphocholine. It catalyses the reaction a lipid IIA + a 1,2-diacyl-sn-glycero-3-phosphocholine = a lipid IIB + a 2-acyl-sn-glycero-3-phosphocholine. Functionally, transfers a fatty acid residue from the sn-1 position of a phospholipid to the N-linked hydroxyfatty acid chain on the proximal unit of lipid A or its precursors. The sequence is that of Lipid A acyltransferase PagP from Salmonella paratyphi C (strain RKS4594).